A 154-amino-acid chain; its full sequence is 6,7-dimethyl-8-ribityllumazine synthase (154 aa).

5-amino-6-(D-ribitylamino)uracil contacts are provided by residues F23, 57 to 59, and 81 to 83; these read AFE and AVI. 86 to 87 provides a ligand contact to (2S)-2-hydroxy-3-oxobutyl phosphate; the sequence is AT. Residue H89 is the Proton donor of the active site. F114 lines the 5-amino-6-(D-ribitylamino)uracil pocket. R128 is a (2S)-2-hydroxy-3-oxobutyl phosphate binding site.

This sequence belongs to the DMRL synthase family.

It catalyses the reaction (2S)-2-hydroxy-3-oxobutyl phosphate + 5-amino-6-(D-ribitylamino)uracil = 6,7-dimethyl-8-(1-D-ribityl)lumazine + phosphate + 2 H2O + H(+). It participates in cofactor biosynthesis; riboflavin biosynthesis; riboflavin from 2-hydroxy-3-oxobutyl phosphate and 5-amino-6-(D-ribitylamino)uracil: step 1/2. Functionally, catalyzes the formation of 6,7-dimethyl-8-ribityllumazine by condensation of 5-amino-6-(D-ribitylamino)uracil with 3,4-dihydroxy-2-butanone 4-phosphate. This is the penultimate step in the biosynthesis of riboflavin. This chain is 6,7-dimethyl-8-ribityllumazine synthase, found in Nautilia profundicola (strain ATCC BAA-1463 / DSM 18972 / AmH).